Consider the following 269-residue polypeptide: Carbohydrate metabolism regulator TYE7 (269 aa).

The segment at 146-178 (QPKIKQEPGTKAATKPKRRAPRKKLTESQKKAH) is disordered. The span at 159–168 (TKPKRRAPRK) shows a compositional bias: basic residues. A compositionally biased stretch (basic and acidic residues) spans 169-178 (KLTESQKKAH). Residues 173–244 (SQKKAHNKIE…EKATEYILHL (72 aa)) form the bHLH domain.

As to quaternary structure, efficient DNA binding requires dimerization with another bHLH protein.

It localises to the nucleus. In terms of biological role, key transcriptional regulator of carbohydrate metabolism. Binds the promoter sequences of the glycolytic genes at the CANNTG motif and activates their expression during growth on either fermentable or non-fermentable carbon sources as well as under hypoxic growth conditions. Complete glycolytic activation by GAL4 and TYE7 is required for full virulence. Involved in biofilm formation and negatively regulates hyphal formation under hypoxia. Also controls the expression of the copper transport protein CTR1. The chain is Carbohydrate metabolism regulator TYE7 (TYE7) from Candida albicans (strain SC5314 / ATCC MYA-2876) (Yeast).